We begin with the raw amino-acid sequence, 1052 residues long: Germline survival defective-1 (1052 aa).

The signal sequence occupies residues 1 to 25; the sequence is MRCLISYLFHSFLIFLKFIRSDVTA. Disordered stretches follow at residues 41–320, 478–543, 667–689, 933–965, and 1033–1052; these read LMKS…DPKN, VNGI…QSVP, PSSQ…EEFE, KQTL…NSYA, and SNNT…NSNF. Low complexity predominate over residues 67 to 145; the sequence is ATATAAATTQ…SSTSSTSQQT (79 aa). The span at 163 to 172 shows a compositional bias: polar residues; sequence TSNTANSQSG. Residues 178 to 190 are compositionally biased toward basic and acidic residues; it reads TNKDRPKEKEKNT. A compositionally biased stretch (low complexity) spans 244-279; the sequence is NAKSSGFLSNSSLSSAGQISASSAPPVSTTPTAIPI. The segment covering 305–320 has biased composition (basic and acidic residues); it reads KRDEEPMPYKSTDPKN. The tract at residues 424-732 is gld-4 binding; that stretch reads QHPPGLPPLL…QIEKNDNLFS (309 aa). The segment covering 480-514 has biased composition (polar residues); it reads GISNNIPSDRQQLDSKPNTARGSSGNINQSNTTSP. The span at 674–689 shows a compositional bias: acidic residues; the sequence is DENDTDSDHESEEEFE. Residues 892 to 1052 are gld-3 binding; it reads PIELPVNMQP…SGGGNQNSNF (161 aa). Residues 950 to 963 are compositionally biased toward low complexity; sequence EGSQQNGGTSSSNS. The span at 1038–1052 shows a compositional bias: gly residues; sequence GVNGNSGGGNQNSNF.

In terms of assembly, isoform C interacts (via C-terminus) with gld-3 isoform A (via C-terminus) in an RNA-independent manner. Isoform C interacts with gld-4. Expressed in the germline (at protein level). In the early embryo is expressed in all cells, then becomes gradually restricted to the germ cell lineage and enriches in P granules (at protein level). In adult hermaphrodites, is expressed in the mitotic region, accumulates during early stages of meiotic prophase I and is slightly less abundant in maturing oocytes (at protein level).

Its subcellular location is the cytoplasm. The protein localises to the cytoplasmic granule. Functionally, required maternally for germline survival by forming a maternal complex with gld-3. During hermaphrodite development forms a complex with gld-3 which promotes the sperm/oocyte switch freeing the translational repressor fbf to turn off sperm promoting factors. Required for proper oocyte differentiation and oogenic meiotic arrest. Stimulates the enzymatic activity of gld-4 and together they prevent gld-1 mRNA degradation. The protein is Germline survival defective-1 of Caenorhabditis elegans.